Consider the following 440-residue polypeptide: Gamma-aminobutyric acid receptor subunit pi (440 aa).

Positions 1-23 are cleaved as a signal peptide; that stretch reads MKRSLHLTFVCLSLFSARMCVQG. Over 24-241 the chain is Extracellular; that stretch reads NQFNIEVSRS…LVLQFELQRN (218 aa). Residues Asn-43, Asn-102, and Asn-145 are each glycosylated (N-linked (GlcNAc...) asparagine). Cys-160 and Cys-174 form a disulfide bridge. N-linked (GlcNAc...) asparagine glycans are attached at residues Asn-196 and Asn-228. Residues 242-262 traverse the membrane as a helical segment; it reads VLYFILETYVPSTFLVVLSWV. Topologically, residues 263 to 270 are cytoplasmic; that stretch reads SFWISLDS. A helical transmembrane segment spans residues 271–290; that stretch reads VPARTCIGVTTVLSMTTLMI. Residues 291–301 lie on the Extracellular side of the membrane; it reads GSRTSLPNTNC. The helical transmembrane segment at 302–322 threads the bilayer; it reads FIKAIDVYLGICFSFVFGALL. Topologically, residues 323–419 are cytoplasmic; the sequence is EYAVAHYSSL…NPSNVDRYSK (97 aa). The chain crosses the membrane as a helical span at residues 420–440; sequence LLFPLIFMLANVFYWAYYMYF.

This sequence belongs to the ligand-gated ion channel (TC 1.A.9) family. Gamma-aminobutyric acid receptor (TC 1.A.9.5) subfamily. GABRP sub-subfamily. As to quaternary structure, heteropentamer, formed by a combination of alpha (GABRA1-6), beta (GABRB1-3), gamma (GABRG1-3), delta (GABRD), epsilon (GABRE), rho (GABRR1-3), pi (GABRP) and theta (GABRQ) chains, each subunit exhibiting distinct physiological and pharmacological properties.

Its subcellular location is the cell membrane. The protein localises to the apical cell membrane. The enzyme catalyses chloride(in) = chloride(out). Pi subunit of the heteropentameric ligand-gated chloride channel gated by gamma-aminobutyric acid (GABA). GABA-gated chloride channels, also named GABA(A) receptors (GABAAR), consist of five subunits arranged around a central pore and contain GABA active binding site(s) located at the alpha and beta subunit interfaces. When activated by GABA, GABAARs selectively allow the flow of chloride anions across the cell membrane down their electrochemical gradient. Pi-containing GABAARs are mostly located in peripheral tissues. In the uterus, pi subunits modulate uterus contraction by altering the sensitivity of GABAARs to pregnanolone. In the lungs, pi-containing GABAARs contribute to pulmonary fluid transport via luminal secretion of chloride. This chain is Gamma-aminobutyric acid receptor subunit pi (GABRP), found in Bos taurus (Bovine).